Consider the following 749-residue polypeptide: MEEESGEELGLDRSTPKDFHFYHMDLYDSEDRLHLFPEENTRMRKVVQAEMANESRGAGDGKAQRDLQEEVDELVHLYGLEDDHELGDEFVDENIPRTGVSEYPPYMMKRRDPAREQRDWRLSGEAAEAEDLGFGGWGSAGQCQDLREAYRYTHGRASEEYECYVIPEEEDEEEAADVFCVTCKTPIRAFQKVFDEHKEHEVIPLNEALESAKDEIHKNMYKLEKQIIEMENFANHLEEVFITVEENFGKQEQNFESHYNEILETLAQKYEEKIQALGEKKKEKLEALYGQLVSCGENLDTCKELMETIEEMCHEEKVDFIKDAVAMADRLGKFLKTKTDVEISAQPEFEDQTLDFSDVEQLMGSINTIPAPSAPVINPQVPNSATGSSVRVCWSLYSDDTVESYQLSYRPVQDSSPGTDQAEFTVTVKETYCSVTNLVPNTQYEFWVTAHNRAGPSPSSERAVYMTAPSPPIIKTKEIRSCEEAVLICWESGNLNPVDSYTVELTQAESPEASGVTESVVGIPTCESVVQLQPGRSYIIYVRALNMGGPSVRSEPATVHTIGSYFRLNKDTCHPWLTISEDGLTAVRSERRTPARELSPSDTHFTRCVAVMGNLIPVRGHHYWEVEVDEHLDYRVGVAFADVRKQEDLGANCLSWCMRHTFASSRHKYEFLHNRTTPDIRITVPPKKIGILLDYEHSKLSFFNVDLSQHLYTFSCQLHEFVHPCFSLEKPGCLKVHNGISMPKHVTFY.

Residues Leu205–Lys317 are a coiled coil. Fibronectin type-III domains lie at Pro375–Ser470 and Pro471–Ser564. Positions Asn546 to Lys744 constitute a B30.2/SPRY domain.

In terms of assembly, interacts with CMYA5. In cardiac muscles, identified in a complex composed of FSD2, CMYA5 and RYR2.

It localises to the nucleus. The protein localises to the sarcoplasmic reticulum. Its subcellular location is the cytoplasm. The protein resides in the perinuclear region. The protein is Fibronectin type III and SPRY domain-containing protein 2 (FSD2) of Homo sapiens (Human).